Reading from the N-terminus, the 469-residue chain is Interstitial collagenase (469 aa).

The N-terminal stretch at 1-18 (MLSLPLLLLLLWGMGSHS) is a signal peptide. The propeptide at 19 to 99 (FPTVPSETRE…PRCGVPDVAE (81 aa)) is activation peptide. The Cysteine switch signature appears at 90 to 97 (PRCGVPDV). Cysteine 92 is a binding site for Zn(2+). Aspartate 124 and aspartate 158 together coordinate Ca(2+). Residues histidine 168 and aspartate 170 each coordinate Zn(2+). Ca(2+) contacts are provided by aspartate 175, glycine 176, glycine 178, and asparagine 180. Histidine 183 is a binding site for Zn(2+). Arginine 190, glycine 192, and aspartate 194 together coordinate Ca(2+). Zn(2+) is bound at residue histidine 196. 3 residues coordinate Ca(2+): aspartate 198, glutamate 199, and glutamate 201. Position 218 (histidine 218) interacts with Zn(2+). Glutamate 219 is an active-site residue. Zn(2+) is bound by residues histidine 222 and histidine 228. Threonine 274 is modified (phosphothreonine). 4 Hemopexin repeats span residues 275–324 (PEVC…WPQL), 325–371 (PNGL…FGFP), 374–422 (VKNI…FPGI), and 423–466 (GDKV…WFNC). A disulfide bridge connects residues cysteine 278 and cysteine 466. Positions 285 and 329 each coordinate Ca(2+). Tyrosine 360 carries the phosphotyrosine; by PKDCC modification. Ca(2+) is bound by residues aspartate 378 and aspartate 427.

The protein belongs to the peptidase M10A family. Ca(2+) serves as cofactor. The cofactor is Zn(2+). Post-translationally, tyrosine phosphorylated in platelets by PKDCC/VLK.

The protein localises to the secreted. The protein resides in the extracellular space. It is found in the extracellular matrix. The catalysed reaction is Cleavage of the triple helix of collagen at about three-quarters of the length of the molecule from the N-terminus, at 775-Gly-|-Ile-776 in the alpha1(I) chain. Cleaves synthetic substrates and alpha-macroglobulins at bonds where P1' is a hydrophobic residue.. With respect to regulation, can be activated without removal of the activation peptide. Functionally, cleaves collagens of types I, II, and III at one site in the helical domain. Also cleaves collagens of types VII and X. This Equus caballus (Horse) protein is Interstitial collagenase (MMP1).